The following is a 172-amino-acid chain: 3-hydroxydecanoyl-[acyl-carrier-protein] dehydratase (172 aa).

The active site involves histidine 71.

The protein belongs to the thioester dehydratase family. FabA subfamily. As to quaternary structure, homodimer.

The protein localises to the cytoplasm. The enzyme catalyses a (3R)-hydroxyacyl-[ACP] = a (2E)-enoyl-[ACP] + H2O. The catalysed reaction is (3R)-hydroxydecanoyl-[ACP] = (2E)-decenoyl-[ACP] + H2O. It carries out the reaction (2E)-decenoyl-[ACP] = (3Z)-decenoyl-[ACP]. Its pathway is lipid metabolism; fatty acid biosynthesis. In terms of biological role, necessary for the introduction of cis unsaturation into fatty acids. Catalyzes the dehydration of (3R)-3-hydroxydecanoyl-ACP to E-(2)-decenoyl-ACP and then its isomerization to Z-(3)-decenoyl-ACP. Can catalyze the dehydratase reaction for beta-hydroxyacyl-ACPs with saturated chain lengths up to 16:0, being most active on intermediate chain length. The chain is 3-hydroxydecanoyl-[acyl-carrier-protein] dehydratase from Salmonella agona (strain SL483).